The primary structure comprises 221 residues: Kynurenine formamidase (221 aa).

Position 30 (phenylalanine 30) interacts with substrate. Residues histidine 60, histidine 64, and aspartate 66 each coordinate Zn(2+). Histidine 70 (proton donor/acceptor) is an active-site residue. Zn(2+)-binding residues include histidine 172 and glutamate 184.

Belongs to the Cyclase 1 superfamily. KynB family. Homodimer. Requires Zn(2+) as cofactor.

It catalyses the reaction N-formyl-L-kynurenine + H2O = L-kynurenine + formate + H(+). Its pathway is amino-acid degradation; L-tryptophan degradation via kynurenine pathway; L-kynurenine from L-tryptophan: step 2/2. In terms of biological role, catalyzes the hydrolysis of N-formyl-L-kynurenine to L-kynurenine, the second step in the kynurenine pathway of tryptophan degradation. The sequence is that of Kynurenine formamidase from Polaromonas sp. (strain JS666 / ATCC BAA-500).